The sequence spans 2213 residues: MATRSSRRESRLPFLFTLVALLPPGALCEVWTRTLHGGRAPLPQERGFRVVQGDPRELRLWERGDARGASRADEKPLRRRRSAALQPEPIKVYGQVSLNDSHNQMVVHWAGEKSNVIVALARDSLALARPRSSDVYVSYDYGKSFNKISEKLNFGAGNNTEAVVAQFYHSPADNKRYIFADAYAQYLWITFDFCNTIHGFSIPFRAADLLLHSKASNLLLGFDRSHPNKQLWKSDDFGQTWIMIQEHVKSFSWGIDPYDKPNTIYIERHEPSGYSTVFRSTDFFQSRENQEVILEEVRDFQLRDKYMFATKVVHLLGSPLQSSVQLWVSFGRKPMRAAQFVTRHPINEYYIADASEDQVFVCVSHSNNRTNLYISEAEGLKFSLSLENVLYYTPGGAGSDTLVRYFANEPFADFHRVEGLQGVYIATLINGSMNEENMRSVITFDKGGTWEFLQAPAFTGYGEKINCELSEGCSLHLAQRLSQLLNLQLRRMPILSKESAPGLIIATGSVGKNLASKTNVYISSSAGARWREALPGPHYYTWGDHGGIIMAIAQGMETNELKYSTNEGETWKAFTFSEKPVFVYGLLTEPGEKSTVFTIFGSNKENVHSWLILQVNATDALGVPCTENDYKLWSPSDERGNECLLGHKTVFKRRTPHATCFNGEDFDRPVVVSNCSCTREDYECDFGFRMSEDLALEVCVPDPGFSGKSSPPVPCPVGSTYRRSRGYRKISGDTCSGGDVEARLEGELVPCPLAEENEFILYATRKSIHRYDLASGTTEQLPLTGLRAAVALDFDYEHNCLYWSDLALDVIQRLCLNGSTGQEVIINSDLETVEALAFEPLSQLLYWVDAGFKKIEVANPDGDFRLTVVNSSVLDRPRALVLVPQEGIMFWTDWGDLKPGIYRSNMDGSAAYRLVSEDVKWPNGISVDDQWIYWTDAYLDCIERITFSGQQRSVILDRLPHPYAIAVFKNEIYWDDWSQLSIFRASKYSGSQMEILASQLTGLMDMKIFYKGKNTGSNACVPRPCSLLCLPRANNSKSCRCPDGVASSVLPSGDLMCDCPKGYELKNNTCVKEEDTCLRNQYRCSNGNCINSIWWCDFDNDCGDMSDEKNCPTTICDLDTQFRCQESGTCIPLSYKCDLEDDCGDNSDERHCEMHQCRSDEYNCSSGMCIRSSWVCDGDNDCRDWSDEANCTAIYHTCEASNFQCRNGHCIPQRWACDGDADCQDGSDEDPANCEKKCNGFRCPNGTCIPSTKHCDGLHDCSDGSDEQHCEPLCTRFMDFVCKNRQQCLFHSMVCDGIIQCRDGSDEDPAFAGCSRDPEFHKVCDEFGFQCQNGVCISLIWKCDGMDDCGDYSDEANCENPTEAPNCSRYFQFRCDNGHCIPNRWKCDRENDCGDWSDEKDCGDSHVLPSTTPAPSTCLPNYYRCGGGACVIDTWVCDGYRDCADGSDEEACPSLPNVTATSSPSQPGRCDRFEFECHQPKKCIPNWRRCDGHQDCQDGQDEANCPTHSTLTCMSWEFKCEDGEACIVLSERCDGFLDCSDESDEKACSDELTVYKVQNLQWTADFSGNVTLTWMRPKKMPSAACVYNVYYRVVGESIWKTLETHSNKTNTVLKVLKPDTTYQVKVQVQCLSKVHNTNDFVTLRTPEGLPDAPQNLQLSLHGEEEGVIVGHWSPPTHTHGLIREYIVEYSRSGSKVWTSERAASNFTEIKNLLVNTLYTVRVAAVTSRGIGNWSDSKSITTVKGKAIPPPNIHIDNYDENSLSFTLTVDGNIKVNGYVVNLFWAFDTHKQEKKTMNFQGSSVSHKVGNLTAQTAYEISAWAKTDLGDSPLSFEHVTTRGVRPPAPSLKARAINQTAVECTWTGPRNVVYGIFYATSFLDLYRNPSSLTTPLHNATVLVGKDEQYLFLVRVVMPYQGPSSDYVVVKMIPDSRLPPRHLHAVHTGKTSAVIKWESPYDSPDQDLFYAIAVKDLIRKTDRSYKVKSRNSTVEYTLSKLEPGGKYHVIVQLGNMSKDASVKITTVSLSAPDALKIITENDHVLLFWKSLALKEKYFNESRGYEIHMFDSAMNITAYLGNTTDNFFKISNLKMGHNYTFTVQARCLLGSQICGEPAVLLYDELGSGGDASAMQAARSTDVAAVVVPILFLILLSLGVGFAILYTKHRRLQSSFTAFANSHYSSRLGSAIFSSGDDLGEDDEDAPMITGFSDDVPMVIA.

The first 28 residues, 1-28 (MATRSSRRESRLPFLFTLVALLPPGALC), serve as a signal peptide directing secretion. Positions 29 to 81 (EVWTRTLHGGRAPLPQERGFRVVQGDPRELRLWERGDARGASRADEKPLRRRR) are cleaved as a propeptide — removed in mature form. The short motif at 63 to 65 (RGD) is the Cell attachment site element. Residues 82-2136 (SAALQPEPIK…MQAARSTDVA (2055 aa)) are Lumenal-facing. An N-linked (GlcNAc...) asparagine glycan is attached at N99. Residue S114 is modified to Phosphoserine. A BNR 1 repeat occupies 136 to 147 (YVSYDYGKSFNK). N158 is a glycosylation site (N-linked (GlcNAc...) asparagine). The BNR 2 repeat unit spans residues 232-243 (WKSDDFGQTWIM). Residues N368 and N430 are each glycosylated (N-linked (GlcNAc...) asparagine). 3 BNR repeats span residues 441–452 (VITFDKGGTWEF), 521–532 (YISSSAGARWRE), and 562–573 (KYSTNEGETWKA). N-linked (GlcNAc...) asparagine glycans are attached at residues N616, N674, N817, and N870. LDL-receptor class B repeat units follow at residues 799-842 (NCLY…EPLS), 843-886 (QLLY…VPQE), 887-929 (GIMF…SVDD), 930-971 (QWIY…FKNE), and 972-1012 (IYWD…FYKG). One can recognise an EGF-like domain in the interval 1025–1071 (CSLLCLPRANNSKSCRCPDGVASSVLPSGDLMCDCPKGYELKNNTCV). N-linked (GlcNAc...) asparagine glycosylation is found at N1034 and N1067. 9 LDL-receptor class A domains span residues 1075–1113 (DTCL…NCPT), 1114–1154 (TICD…HCEM), 1155–1193 (HQCR…NCTA), 1196–1235 (HTCE…ANCE), 1237–1271 (KCNG…QHCE), 1272–1316 (PLCT…GCSR), 1322–1360 (KVCD…NCEN), 1365–1404 (PNCS…DCGD), and 1416–1454 (STCL…ACPS). Disulfide bonds link C1077–C1089, C1084–C1102, C1096–C1111, C1116–C1130, C1124–C1143, C1137–C1152, C1157–C1169, C1164–C1182, C1176–C1191, C1198–C1210, C1205–C1223, C1217–C1234, C1238–C1248, C1243–C1261, C1255–C1270, C1274–C1288, C1282–C1301, C1295–C1314, C1324–C1336, C1331–C1349, and C1343–C1358. N-linked (GlcNAc...) asparagine glycosylation is present at N1163. N1190 carries an N-linked (GlcNAc...) asparagine glycan. An N-linked (GlcNAc...) asparagine glycan is attached at N1245. N1366 is a glycosylation site (N-linked (GlcNAc...) asparagine). Disulfide bonds link C1367–C1380, C1375–C1393, C1387–C1402, C1418–C1430, C1425–C1443, and C1437–C1452. N1457 carries an N-linked (GlcNAc...) asparagine glycan. LDL-receptor class A domains lie at 1468–1507 (GRCD…NCPT) and 1511–1550 (LTCM…ACSD). Intrachain disulfides connect C1470–C1483, C1477–C1496, C1490–C1505, C1513–C1526, C1520–C1539, and C1533–C1548. Fibronectin type-III domains are found at residues 1556–1648 (KVQN…TPEG), 1652–1744 (APQN…TVKG), 1748–1843 (PPPN…VRPP), 1842–1926 (PPAP…VVKM), 1933–2028 (PPRH…APDA), and 2029–2117 (LKII…LYDE). N1569, N1607, N1705, N1732, N1808, N1853, N1893, N1985, N2009, N2053, N2068, N2075, and N2091 each carry an N-linked (GlcNAc...) asparagine glycan. A helical membrane pass occupies residues 2137 to 2157 (AVVVPILFLILLSLGVGFAIL). Over 2158–2213 (YTKHRRLQSSFTAFANSHYSSRLGSAIFSSGDDLGEDDEDAPMITGFSDDVPMVIA) the chain is Cytoplasmic. Residues 2160–2163 (KHRR) carry the Potential nuclear localization signal for the C-terminal fragment generated by PSEN1 motif. The Endocytosis signal signature appears at 2171 to 2176 (FANSHY). The required for efficient Golgi apparatus - endosome sorting stretch occupies residues 2189–2213 (DDLGEDDEDAPMITGFSDDVPMVIA). The tract at residues 2200-2213 (MITGFSDDVPMVIA) is required for interaction with GGA1 and GGA2. S2205 carries the post-translational modification Phosphoserine; by ROCK2. Positions 2207 to 2211 (DVPMV) match the DXXLL motif involved in the interaction with GGA1 motif.

Belongs to the VPS10-related sortilin family. SORL1 subfamily. After maturation cleavage, interacts (via N-terminus) with its own propeptide; this interaction prevents interaction with other ligands, including CRLF1, GDNF, GFRA1, IL6 and IL6R. Interacts (via N-terminal ectodomain) with APP, forming a 1:1 stoichiometric complex; this interaction retains APP in the trans-Golgi network and reduces processing into soluble APP-alpha and amyloid-beta peptides. Also interacts with APP C-terminal fragment C99 and with Abeta40. Interacts with beta-secretase BACE1/BACE; this interaction may affect BACE1-binding to APP and hence reduce BACE1-dependent APP cleavage. Interacts with LRPAP1/RAP. Interacts (via C-terminal cytosolic domain) with GGA1 and GGA2 (via N-terminal VHS domain). Interacts with PACS1. May interact (via the N-terminal ectodomain) with the morphogenetic neuropeptide, also called head activator or HA; this interaction is impaired in the presence of propeptide. Interacts with neurotensin/NTS. Interacts (via the N-terminal ectodomain) with PDGFB homodimer. Interacts (via N-terminal ectodomain) with the uPA receptor PLAUR. Interacts with uPA/PLAU and PAI1/SERPINE1, either individually or in complex with each other, leading to endocytosis. Also interacts with PAI1/SERPINE1 in complex with tPA/PLAT. Interacts (via C-terminus) with AP-1 and AP-2 complexes. Interacts with BMPR1A and BMPR1B. Interacts with lipoprotein lipase LPL; this interaction is optimal in slightly acidic conditions. Interacts (via N-terminal ectodomain) with GDNF (via propeptide) and GDNF receptor alpha-1/GFRA1, either individually or in complex with each other. The interaction with GDNF occurs mostly intracellularly. Also interacts with other GDNF receptor alpha family members, including GFRA2, GFRA3 and GFRA4. Interacts with the insulin receptor INSR; this interaction strongly increases the surface exposure of INSR. Interacts (via cytosolic C-terminus) with STK39/SPAK. Interacts (via N-terminal ectodomain) with the heterodimeric complex CRLF1-CLC; within this complex, the interaction is mediated predominantly by the CRLF1 moiety. Interacts with CNTFR, as well as with the tripartite signaling complex formed by CRLF1, CLC and CNTFR. Interacts (via N-terminal ectodomain) with IL6; this interaction leads to IL6 internalization and lysosomal degradation. Binding of SOLRL1 secreted N-terminal ectodomain to IL6 may increase IL6 trans signaling. Interacts with secreted IL6R; this interaction leads to IL6R internalization. Also interacts with transmembrane IL6R; this interaction does not affect subcellular location. Interacts with APOE. Interacts with apolipoprotein E-rich beta-VLDL. Interacts with APOA5; this interaction leads to APOA5 internalization and is abolished by heparin. Interaction with APOA5 results in enhanced binding to chylomicrons. Interacts with ROCK2. Interacts (via cytosolic C-terminus) with PPP3CB/calcineurin A beta. Interacts with NTRK2/TRKB; this interaction facilitates NTRK2 trafficking between synaptic plasma membranes, postsynaptic densities and cell soma, hence positively regulates BDNF signaling. Interacts (via cytosolic C-terminus) with HSPA12A in an ADP-dependent manner; this interaction affects SORL1 internalization and subcellular localization. Interacts (via N-terminal ectodomain) with ERBB2/HER2. Post-translationally, within the Golgi apparatus, the propeptide may be cleaved off by FURIN or a furin-like protease. After cleavage, the propeptide interacts with the mature protein N-terminus, preventing the association with other ligands. At the cell surface, partially subjected to proteolytic shedding that releases the ectodomain in the extracellular milieu. The shedding may be catalyzed by ADAM17/TACE. Following shedding, PSEN1/presenilin-1 cleaves the remaining transmembrane fragment and catalyzes the release of a C-terminal fragment in the cytosol and of a soluble N-terminal beta fragment in the extracellular milieu. The C-terminal cytosolic fragment localizes to the nucleus. In terms of processing, phosphorylation at Ser-2205 facilitates the interaction with GGA1. Expressed in brain, in particular the hippocampus, dentate gyrus, and cerebral cortex (at protein level). Also detected in liver, adrenal glands, pancreas and testis. Expressed in smooth muscle cells, predominantly during proliferation.

The protein resides in the golgi apparatus membrane. It is found in the golgi apparatus. Its subcellular location is the trans-Golgi network membrane. It localises to the endosome membrane. The protein localises to the early endosome membrane. The protein resides in the recycling endosome membrane. It is found in the endoplasmic reticulum membrane. Its subcellular location is the endosome. It localises to the multivesicular body membrane. The protein localises to the cell membrane. The protein resides in the cytoplasmic vesicle. It is found in the secretory vesicle membrane. Its subcellular location is the secreted. Functionally, sorting receptor that directs several proteins to their correct location within the cell. Along with AP-1 complex, involved Golgi apparatus - endosome sorting. Sorting receptor for APP, regulating its intracellular trafficking and processing into amyloidogenic-beta peptides. Retains APP in the trans-Golgi network, hence preventing its transit through late endosomes where amyloid beta peptides Abeta40 and Abeta42 are generated. May also sort newly produced amyloid-beta peptides to lysosomes for catabolism. Does not affect APP trafficking from the endoplasmic reticulum to Golgi compartments. Sorting receptor for the BDNF receptor NTRK2/TRKB that facilitates NTRK2 trafficking between synaptic plasma membranes, postsynaptic densities and cell soma, hence positively regulates BDNF signaling by controlling the intracellular location of its receptor. Sorting receptor for GDNF that promotes GDNF regulated, but not constitutive secretion. Sorting receptor for the GDNF-GFRA1 complex, directing it from the cell surface to endosomes. GDNF is then targeted to lysosomes and degraded, while its receptor GFRA1 recycles back to the cell membrane, resulting in a GDNF clearance pathway. The SORL1-GFRA1 complex further targets RET for endocytosis, but not for degradation, affecting GDNF-induced neurotrophic activities. Sorting receptor for ERBB2/HER2. Regulates ERBB2 subcellular distribution by promoting its recycling after internalization from endosomes back to the plasma membrane, hence stimulating phosphoinositide 3-kinase (PI3K)-dependent ERBB2 signaling. Sorting receptor for lipoprotein lipase LPL. Promotes LPL localization to endosomes and later to the lysosomes, leading to degradation of newly synthesized LPL. Potential sorting receptor for APOA5, inducing APOA5 internalization to early endosomes, then to late endosomes, wherefrom a portion is sent to lysosomes and degradation, another portion is sorted to the trans-Golgi network. Sorting receptor for the insulin receptor INSR. Promotes recycling of internalized INSR via the Golgi apparatus back to the cell surface, thereby preventing lysosomal INSR catabolism, increasing INSR cell surface expression and strengthening insulin signal reception in adipose tissue. Does not affect INSR internalization. Plays a role in renal ion homeostasis, controlling the phospho-regulation of SLC12A1/NKCC2 by STK39/SPAK kinase and PPP3CB/calcineurin A beta phosphatase, possibly through intracellular sorting of STK39 and PPP3CB. Stimulates, via the N-terminal ectodomain, the proliferation and migration of smooth muscle cells, possibly by increasing cell surface expression of the urokinase receptor uPAR/PLAUR. This may promote extracellular matrix proteolysis and hence facilitate cell migration. By acting on the migration of intimal smooth muscle cells, may accelerate intimal thickening following vascular injury. Promotes adhesion of monocytes. Stimulates proliferation and migration of monocytes/macrophages. Through its action on intimal smooth muscle cells and macrophages, may accelerate intimal thickening and macrophage foam cell formation in the process of atherosclerosis. Regulates hypoxia-enhanced adhesion of hematopoietic stem and progenitor cells to the bone marrow stromal cells via a PLAUR-mediated pathway. This function is mediated by the N-terminal ectodomain. Metabolic regulator, which functions to maintain the adequate balance between lipid storage and oxidation in response to changing environmental conditions, such as temperature and diet. The N-terminal ectodomain negatively regulates adipose tissue energy expenditure, acting through the inhibition the BMP/Smad pathway. May regulate signaling by the heterodimeric neurotrophic cytokine CLCF1-CRLF1 bound to the CNTFR receptor by promoting the endocytosis of the tripartite complex CLCF1-CRLF1-CNTFR and lysosomal degradation. May regulate IL6 signaling, decreasing cis signaling, possibly by interfering with IL6-binding to membrane-bound IL6R, while up-regulating trans signaling via soluble IL6R. The polypeptide is Sortilin-related receptor (SORL1) (Oryctolagus cuniculus (Rabbit)).